The following is a 323-amino-acid chain: tRNA-dihydrouridine(20/20a) synthase (323 aa).

FMN is bound by residues 14-16 (PML) and Gln-66. Catalysis depends on Cys-96, which acts as the Proton donor. FMN is bound by residues Lys-135, His-166, 206 to 208 (NGG), and 228 to 229 (GR).

It belongs to the Dus family. DusA subfamily. Requires FMN as cofactor.

The enzyme catalyses 5,6-dihydrouridine(20) in tRNA + NADP(+) = uridine(20) in tRNA + NADPH + H(+). The catalysed reaction is 5,6-dihydrouridine(20) in tRNA + NAD(+) = uridine(20) in tRNA + NADH + H(+). It catalyses the reaction 5,6-dihydrouridine(20a) in tRNA + NADP(+) = uridine(20a) in tRNA + NADPH + H(+). It carries out the reaction 5,6-dihydrouridine(20a) in tRNA + NAD(+) = uridine(20a) in tRNA + NADH + H(+). Functionally, catalyzes the synthesis of 5,6-dihydrouridine (D), a modified base found in the D-loop of most tRNAs, via the reduction of the C5-C6 double bond in target uridines. Specifically modifies U20 and U20a in tRNAs. The polypeptide is tRNA-dihydrouridine(20/20a) synthase (Haemophilus ducreyi (strain 35000HP / ATCC 700724)).